A 432-amino-acid polypeptide reads, in one-letter code: MSTQVLIVGGGIGGLTLAAMCRRIGVSCRVLERSAALEPVGAGISLAPNALRALDQIGLYDYVRQEGQPVRKIRVYRNQTQWSEIDFQWLERTFGYPVYSIERHGFHRRLYDAAGGSETVNLGAEVAKVIPPQEEAEGVSVVLKDGRRYTGNVLVGADGVRSVVRRALMATINSPPGQSGAVGEDEDAADVIQFTGRVHLSGYTHPLDHLGPADEGIAYWMLYDRSILTTWPCRDHRQWFVGAVPSKLKDPNRSVWKHADHNTINQVYGSEYHPFAPDFHFRDVVKHAERVVASDVFHQTTFPPMAAGRIAMLGDASHAMTSFFGQGACQAIEDATELASALGMIDVRPTDAETILQGYRHSRERRGRDLVVFSDRFALLHTGRLLGSWGPFVRQMVYTWMPLWGWKWALQWLYGHQPTLVEQRNEAAKKTA.

4 residues coordinate FAD: glutamate 32, arginine 103, aspartate 315, and alanine 328.

The protein belongs to the paxM FAD-dependent monooxygenase family. FAD serves as cofactor.

It functions in the pathway secondary metabolite biosynthesis. Functionally, FAD-dependent monooxygenase; part of the gene cluster that mediates the biosynthesis of pyranonigrins, a family of antioxidative compounds. The first step of pyranonigrins biosynthesis is performed by the hybrid PKS-NRPS synthetase that condenses 6 malonyl-CoA units to an acetyl starter unit, to form a 1,3,5-trioxotetradecane-6,8-dienyl-ACP. The enoyl reductase (ER) domain of pynA is likely to be functional during the first two rounds of polyketide chain extension, to generate the saturated C-C bonds of the alkyl side chain. PynA subsequently forms the amide bond between the acyl chain and L-serine. Although pynA has a terminal reductase domain, it appears to require the thioesterase pynI for the release of the straight-chain intermediate from pynA via the formation of a tetramic acid pyranonigrin J. The methyltransferase pynC then coverts pyranonigrin J to pyranonigrin I via N-methylation. The FAD-dependent monooxygenase pynG catalyzes an epoxidation-mediated cyclization to form the dihydro-gamma-pyrone moiety, followed by pynD-catalyzed oxidation of the alcohol to the ketone and enolization to yield the characteristic tetramic acid-fused gamma-pyrone core of pyranonigrin H. Pyranonigrin H is substrate of pynH for dehydration-mediated exo-methylene formation from the serine side chain to produce pyranonigrin E, before the oxidase pynE reduces the exo-methylene of pyranonigrin E into a pendant methyl to form pyranonigrin G. The FAD-linked oxidoreductase pynB performs the reverse reaction and converts pyranonigrin G back to pyranonigrin E. This chain is FAD-dependent monooxygenase pynG, found in Aspergillus niger (strain ATCC MYA-4892 / CBS 513.88 / FGSC A1513).